A 240-amino-acid chain; its full sequence is Methylthioribulose-1-phosphate dehydratase (240 aa).

Substrate is bound at residue cysteine 99. Residues histidine 116 and histidine 118 each contribute to the Zn(2+) site. The active-site Proton donor/acceptor is glutamate 145. Histidine 201 serves as a coordination point for Zn(2+).

Belongs to the aldolase class II family. MtnB subfamily. It depends on Zn(2+) as a cofactor.

The protein localises to the cytoplasm. It carries out the reaction 5-(methylsulfanyl)-D-ribulose 1-phosphate = 5-methylsulfanyl-2,3-dioxopentyl phosphate + H2O. The protein operates within amino-acid biosynthesis; L-methionine biosynthesis via salvage pathway; L-methionine from S-methyl-5-thio-alpha-D-ribose 1-phosphate: step 2/6. Functionally, catalyzes the dehydration of methylthioribulose-1-phosphate (MTRu-1-P) into 2,3-diketo-5-methylthiopentyl-1-phosphate (DK-MTP-1-P). The chain is Methylthioribulose-1-phosphate dehydratase from Ajellomyces capsulatus (strain G186AR / H82 / ATCC MYA-2454 / RMSCC 2432) (Darling's disease fungus).